Reading from the N-terminus, the 577-residue chain is Laccase-25 (577 aa).

Positions 1-22 are cleaved as a signal peptide; it reads MTLHWSLLLFIAIALVSSVAQA. Plastocyanin-like domains lie at 30–147 and 158–313; these read NVGN…PRGG and KEHV…YAGA. Residue Asn33 is glycosylated (N-linked (GlcNAc...) asparagine). 2 residues coordinate Cu cation: His81 and His83. Asn109 carries an N-linked (GlcNAc...) asparagine glycan. His126 and His128 together coordinate Cu cation. N-linked (GlcNAc...) asparagine glycans are attached at residues Asn169, Asn203, Asn208, Asn218, Asn332, Asn383, Asn396, Asn404, Asn441, and Asn459. A Plastocyanin-like 3 domain is found at 423–560; sequence DFPDTPPVVF…AMVLEVLDGP (138 aa). Residues His477, His480, His482, His539, Cys540, His541, and His545 each contribute to the Cu cation site.

Belongs to the multicopper oxidase family. It depends on Cu cation as a cofactor.

It localises to the secreted. It is found in the extracellular space. The protein localises to the apoplast. The catalysed reaction is 4 hydroquinone + O2 = 4 benzosemiquinone + 2 H2O. In terms of biological role, lignin degradation and detoxification of lignin-derived products. This chain is Laccase-25 (LAC25), found in Oryza sativa subsp. japonica (Rice).